The sequence spans 698 residues: Ion-translocating oxidoreductase complex subunit C (698 aa).

4Fe-4S ferredoxin-type domains lie at 366–397 and 407–436; these read TEMG…QQLY and KARN…VQYY. Residues Cys-377, Cys-380, Cys-383, Cys-387, Cys-416, Cys-419, Cys-422, and Cys-426 each contribute to the [4Fe-4S] cluster site.

This sequence belongs to the 4Fe4S bacterial-type ferredoxin family. RnfC subfamily. In terms of assembly, the complex is composed of six subunits: RnfA, RnfB, RnfC, RnfD, RnfE and RnfG. The cofactor is [4Fe-4S] cluster.

Its subcellular location is the cell inner membrane. Functionally, part of a membrane-bound complex that couples electron transfer with translocation of ions across the membrane. The chain is Ion-translocating oxidoreductase complex subunit C from Yersinia pseudotuberculosis serotype O:1b (strain IP 31758).